The primary structure comprises 327 residues: Methionyl-tRNA formyltransferase (327 aa).

121–124 provides a ligand contact to (6S)-5,6,7,8-tetrahydrofolate; it reads SLLP.

This sequence belongs to the Fmt family.

The catalysed reaction is L-methionyl-tRNA(fMet) + (6R)-10-formyltetrahydrofolate = N-formyl-L-methionyl-tRNA(fMet) + (6S)-5,6,7,8-tetrahydrofolate + H(+). In terms of biological role, attaches a formyl group to the free amino group of methionyl-tRNA(fMet). The formyl group appears to play a dual role in the initiator identity of N-formylmethionyl-tRNA by promoting its recognition by IF2 and preventing the misappropriation of this tRNA by the elongation apparatus. The chain is Methionyl-tRNA formyltransferase from Burkholderia vietnamiensis (strain G4 / LMG 22486) (Burkholderia cepacia (strain R1808)).